Reading from the N-terminus, the 34-residue chain is Potassium channel toxin alpha-KTx 6.3 (34 aa).

4 disulfides stabilise this stretch: Cys3/Cys24, Cys9/Cys29, Cys13/Cys31, and Cys19/Cys34. Cys34 carries the post-translational modification Cysteine amide.

Belongs to the short scorpion toxin superfamily. Potassium channel inhibitor family. Alpha-KTx 06 subfamily. In terms of processing, amidated. The amidated toxin shows 5-fold more affinity for Kv1.3/KCNA3 than the synthetic carboxylated form. In terms of tissue distribution, expressed by the venom gland.

Its subcellular location is the secreted. In terms of biological role, potently blocks voltage-gated potassium channels Kv1.1/KCNA1 (IC(50)=7-11 nM) and Kv1.3/KCNA3 (IC(50)=11-29 pM). Also mildly blocks intermediate (IK) conductance calcium-activated potassium channels (KCa3.1/KCNN4) and ERG1/Kv11.1/KCNH2. Shows ability to suppress proliferation of lymphocytes, which are known to be sensitive to Kv1.3/KCNA3 homotetrameric channel block. In Heterometrus spinifer (Asia giant forest scorpion), this protein is Potassium channel toxin alpha-KTx 6.3.